The primary structure comprises 347 residues: Monopolin complex subunit LRS4 (347 aa).

The stretch at 46 to 118 (KKVVDETLFL…QISVDKHNKE (73 aa)) forms a coiled coil. Basic and acidic residues predominate over residues 112–130 (VDKHNKERTPSTGRDEQQR). Disordered regions lie at residues 112–183 (VDKH…SLLS) and 208–230 (RNDTTSSKIAGKSPSRLSALQKS). Polar residues-rich tracts occupy residues 131–140 (NSKAAHTSKP) and 155–172 (NNQTNDRGGNDPDSPTSQ). Phosphoserine occurs at positions 168 and 230.

As to quaternary structure, component of the monopolin complex composed of at least CSM1, LRS4 and MAM1. The complex associates with the kinetochore. In terms of processing, phosphorylated by CDC5. This phosphorylation is required for the location to the kinetochores during late pachytene.

Its subcellular location is the nucleus. It is found in the nucleolus. It localises to the chromosome. The protein localises to the centromere. Component of the monopolin complex which promotes monoorientation during meiosis I, required for chromosome segregation during meiosis. Involved in rDNA silencing. In Saccharomyces cerevisiae (strain ATCC 204508 / S288c) (Baker's yeast), this protein is Monopolin complex subunit LRS4 (LRS4).